The following is a 315-amino-acid chain: AT-hook motif nuclear-localized protein 19 (315 aa).

The segment covering 1 to 25 (MANPWWTGQVNLSGLETTPPGSSQL) has biased composition (polar residues). Disordered regions lie at residues 1–104 (MANP…RDSP) and 239–285 (EEEA…YNMP). The segment covering 61–74 (DNLSGDDHEPREGA) has biased composition (basic and acidic residues). Residues 80–92 (RRPRGRPAGSKNK) constitute a DNA-binding region (a.T hook). Positions 104-248 (PNALKSHVME…EEEAAERGGG (145 aa)) constitute a PPC domain. A compositionally biased stretch (gly residues) spans 245-276 (RGGGGGSGGVVPGQLGGGGSPLSSGAGGGDGN).

As to expression, slightly expressed in roots.

Its subcellular location is the nucleus. Transcription factor that specifically binds AT-rich DNA sequences related to the nuclear matrix attachment regions (MARs). Negatively regulates plant innate immunity (PTI) to pathogens through the down-regulation of the PAMP-triggered FRK1 expression. Positively regulates defense against fungal Verticillium infection. The chain is AT-hook motif nuclear-localized protein 19 from Arabidopsis thaliana (Mouse-ear cress).